Here is a 161-residue protein sequence, read N- to C-terminus: Calcium-binding protein CML24 (161 aa).

EF-hand domains are found at residues G13–T48, A49–G84, N90–K125, and C126–A161. 19 residues coordinate Ca(2+): D26, N28, D30, K32, E37, D62, D64, N66, E73, D103, D105, N107, R109, E114, D139, D141, D143, C145, and E150.

In terms of tissue distribution, expressed in seed coat, seedling radical, cotyledons, hypocotyl, shoot apex and elongating root. Expressed in the vasculature of cotyledons, leaves and roots. Highly expressed in guard cells, trichomes and hydathodes. Expressed in inflorescence stem branch points, silique abscission zone, young and mature styles and stigmatic papillae, mature anthers and developing seed.

Functionally, calcium-binding protein that may positively regulate abscisic acid (ABA) inhibition of germination and seedling development. May be required for photoperiod-induced flowering and function in ion homeostasis. In Arabidopsis thaliana (Mouse-ear cress), this protein is Calcium-binding protein CML24 (CML24).